We begin with the raw amino-acid sequence, 552 residues long: 5'-AMP-activated protein kinase catalytic subunit alpha-2 (552 aa).

The Protein kinase domain occupies tyrosine 16–phenylalanine 268. ATP is bound by residues leucine 22–valine 30 and lysine 45. Aspartate 139 serves as the catalytic Proton acceptor. Threonine 172 carries the phosphothreonine; by LKB1 and CaMKK2 modification. Threonine 258 is subject to Phosphothreonine. An AIS region spans residues glutamate 291 to aspartate 376. Serine 377 is modified (phosphoserine). The disordered stretch occupies residues glutamate 478 to leucine 520. Polar residues predominate over residues arginine 480–cysteine 490. At serine 491 the chain carries Phosphoserine. A compositionally biased stretch (polar residues) spans serine 501–histidine 510. Positions serine 511–leucine 520 are enriched in low complexity.

It belongs to the protein kinase superfamily. CAMK Ser/Thr protein kinase family. SNF1 subfamily. In terms of assembly, AMPK is a heterotrimer of an alpha catalytic subunit (PRKAA1 or PRKAA2), a beta (PRKAB1 or PRKAB2) and a gamma non-catalytic subunits (PRKAG1, PRKAG2 or PRKAG3). Interacts with FNIP1 and FNIP2. Associates with internalized INSR complexes on Golgi/endosomal membranes; PRKAA2/AMPK2 together with ATIC and HACD3/PTPLAD1 is proposed to be part of a signaling network regulating INSR autophosphorylation and endocytosis. Interacts with DUSP29. Interacts with ARF6. The phosphorylated form at Thr-172 mediated by CamKK2 interacts with ACSS2. Mg(2+) serves as cofactor. In terms of processing, ubiquitinated. Phosphorylated at Thr-172 by STK11/LKB1 in complex with STE20-related adapter-alpha (STRADA) pseudo kinase and CAB39. Also phosphorylated at Thr-172 by CAMKK2; triggered by a rise in intracellular calcium ions, without detectable changes in the AMP/ATP ratio. CAMKK1 can also phosphorylate Thr-172, but at much lower level. Dephosphorylated by protein phosphatase 2A and 2C (PP2A and PP2C). Phosphorylated by ULK1; leading to negatively regulate AMPK activity and suggesting the existence of a regulatory feedback loop between ULK1 and AMPK. Dephosphorylated by PPM1A and PPM1B at Thr-172 (mediated by STK11/LKB1). As to expression, skeletal muscle, lower levels in liver, heart and kidney.

It is found in the cytoplasm. It localises to the nucleus. The catalysed reaction is L-seryl-[protein] + ATP = O-phospho-L-seryl-[protein] + ADP + H(+). The enzyme catalyses L-threonyl-[protein] + ATP = O-phospho-L-threonyl-[protein] + ADP + H(+). It carries out the reaction L-seryl-[acetyl-CoA carboxylase] + ATP = O-phospho-L-seryl-[acetyl-CoA carboxylase] + ADP + H(+). It catalyses the reaction L-seryl-[3-hydroxy-3-methylglutaryl-coenzyme A reductase] + ATP = O-phospho-L-seryl-[3-hydroxy-3-methylglutaryl-coenzyme A reductase] + ADP + H(+). With respect to regulation, activated by phosphorylation on Thr-172. Binding of AMP to non-catalytic gamma subunit (PRKAG1, PRKAG2 or PRKAG3) results in allosteric activation, inducing phosphorylation on Thr-172. AMP-binding to gamma subunit also sustains activity by preventing dephosphorylation of Thr-172. ADP also stimulates Thr-172 phosphorylation, without stimulating already phosphorylated AMPK. ATP promotes dephosphorylation of Thr-172, rendering the enzyme inactive. Under physiological conditions AMPK mainly exists in its inactive form in complex with ATP, which is much more abundant than AMP. Selectively inhibited by compound C (6-[4-(2-Piperidin-1-yl-ethoxy)-phenyl)]-3-pyridin-4-yl-pyyrazolo[1,5-a] pyrimidine. Activated by resveratrol, a natural polyphenol present in red wine, and S17834, a synthetic polyphenol. Salicylate/aspirin directly activates kinase activity, primarily by inhibiting Thr-172 dephosphorylation. Catalytic subunit of AMP-activated protein kinase (AMPK), an energy sensor protein kinase that plays a key role in regulating cellular energy metabolism. In response to reduction of intracellular ATP levels, AMPK activates energy-producing pathways and inhibits energy-consuming processes: inhibits protein, carbohydrate and lipid biosynthesis, as well as cell growth and proliferation. AMPK acts via direct phosphorylation of metabolic enzymes, and by longer-term effects via phosphorylation of transcription regulators. Regulates lipid synthesis by phosphorylating and inactivating lipid metabolic enzymes such as ACACA, ACACB, GYS1, HMGCR and LIPE; regulates fatty acid and cholesterol synthesis by phosphorylating acetyl-CoA carboxylase (ACACA and ACACB) and hormone-sensitive lipase (LIPE) enzymes, respectively. Promotes lipolysis of lipid droplets by mediating phosphorylation of isoform 1 of CHKA (CHKalpha2). Regulates insulin-signaling and glycolysis by phosphorylating IRS1, PFKFB2 and PFKFB3. Involved in insulin receptor/INSR internalization. AMPK stimulates glucose uptake in muscle by increasing the translocation of the glucose transporter SLC2A4/GLUT4 to the plasma membrane, possibly by mediating phosphorylation of TBC1D4/AS160. Regulates transcription and chromatin structure by phosphorylating transcription regulators involved in energy metabolism such as CRTC2/TORC2, FOXO3, histone H2B, HDAC5, MEF2C, MLXIPL/ChREBP, EP300, HNF4A, p53/TP53, SREBF1, SREBF2 and PPARGC1A. Acts as a key regulator of glucose homeostasis in liver by phosphorylating CRTC2/TORC2, leading to CRTC2/TORC2 sequestration in the cytoplasm. In response to stress, phosphorylates 'Ser-36' of histone H2B (H2BS36ph), leading to promote transcription. Acts as a key regulator of cell growth and proliferation by phosphorylating FNIP1, TSC2, RPTOR, WDR24 and ATG1/ULK1: in response to nutrient limitation, negatively regulates the mTORC1 complex by phosphorylating RPTOR component of the mTORC1 complex and by phosphorylating and activating TSC2. Also phosphorylates and inhibits GATOR2 subunit WDR24 in response to nutrient limitation, leading to suppress glucose-mediated mTORC1 activation. In response to energetic stress, phosphorylates FNIP1, inactivating the non-canonical mTORC1 signaling, thereby promoting nuclear translocation of TFEB and TFE3, and inducing transcription of lysosomal or autophagy genes. In response to nutrient limitation, promotes autophagy by phosphorylating and activating ATG1/ULK1. In that process, it also activates WDR45/WIPI4. Phosphorylates CASP6, thereby preventing its autoprocessing and subsequent activation. AMPK also acts as a regulator of circadian rhythm by mediating phosphorylation of CRY1, leading to destabilize it. May regulate the Wnt signaling pathway by phosphorylating CTNNB1, leading to stabilize it. Also acts as a regulator of cellular polarity by remodeling the actin cytoskeleton; probably by indirectly activating myosin. Also phosphorylates CFTR, EEF2K, KLC1, NOS3 and SLC12A1. Plays an important role in the differential regulation of pro-autophagy (composed of PIK3C3, BECN1, PIK3R4 and UVRAG or ATG14) and non-autophagy (composed of PIK3C3, BECN1 and PIK3R4) complexes, in response to glucose starvation. Can inhibit the non-autophagy complex by phosphorylating PIK3C3 and can activate the pro-autophagy complex by phosphorylating BECN1. Upon glucose starvation, promotes ARF6 activation in a kinase-independent manner leading to cell migration. Upon glucose deprivation mediates the phosphorylation of ACSS2 at 'Ser-659', which exposes the nuclear localization signal of ACSS2, required for its interaction with KPNA1 and nuclear translocation. Upon stress, regulates mitochondrial fragmentation through phosphorylation of MTFR1L. This chain is 5'-AMP-activated protein kinase catalytic subunit alpha-2 (Prkaa2), found in Rattus norvegicus (Rat).